The primary structure comprises 213 residues: Bcl-2-related ovarian killer protein (213 aa).

A Phosphoserine modification is found at Ser-7. The segment at 15-45 is interactions with ITPR1; it reads MDAFDRSPTDKELVAQAKALGREYVHARLLR. Residues Lys-25 and Lys-32 each participate in a glycyl lysine isopeptide (Lys-Gly) (interchain with G-Cter in ubiquitin) cross-link. The BH4 signature appears at 32 to 44; sequence KALGREYVHARLL. The short motif at 67-83 is the BH3 element; sequence VCTVLLRLGDELEQIRP. Positions 71-79 are nuclear export signal; the sequence is LLRLGDELE. The BH1 motif lies at 113 to 132; that stretch reads HIFSAGITWGKVVSLYSVAA. Glycyl lysine isopeptide (Lys-Gly) (interchain with G-Cter in ubiquitin) cross-links involve residues Lys-160 and Lys-177. The BH2 signature appears at 165-179; sequence WLRRRGGWTDVLKCV. The helical transmembrane segment at 190-210 threads the bilayer; that stretch reads WLVATLCSFGRFLKAAFFLLL.

Belongs to the Bcl-2 family. As to quaternary structure, monomer; positively regulates apoptotic process. Homodimer. Heterodimer. Oligomer; promoted by apoptotic stimuli and BH3-only proteins; mediates constitutive activation. Interacts (via BH4 domain) with ITPR1; enhances BOK expression and stabilization; limits apoptosis and prevents ubiquitination and then degradation; protects ITPR1 from proteolysis by CASP3 during apoptosis. Interacts with ITPR2 and ITPR3; binds most strongly to ITPR2, and barely to ITPR3; regulates their expression. Interacts with XPO1; translocates to the cytoplasm. Interacts with BNIP3; promotes oligomerization. In terms of processing, ubiquitinated by AMFR/gp78 E3 ubiquitin ligase complex; mediates degradation by ubiquitin-proteasome pathway in a VCP/p97-dependent manner; prevents from proapoptotic activity; promotes degradation of newly synthesized proteins that are not ITPR1 associated. In terms of tissue distribution, widely expressed. Highly expressed in brain, kidney, and spleen.

The protein resides in the mitochondrion membrane. It localises to the endoplasmic reticulum membrane. Its subcellular location is the mitochondrion inner membrane. It is found in the cytoplasm. The protein localises to the nucleus. The protein resides in the mitochondrion. It localises to the endoplasmic reticulum. Its subcellular location is the mitochondrion outer membrane. It is found in the early endosome membrane. The protein localises to the recycling endosome membrane. The protein resides in the nucleus outer membrane. It localises to the golgi apparatus. Its subcellular location is the cis-Golgi network membrane. It is found in the trans-Golgi network membrane. The protein localises to the membrane. Its function is as follows. Apoptosis regulator that functions through different apoptotic signaling pathways. Plays a roles as pro-apoptotic protein that positively regulates intrinsic apoptotic process in a BAX- and BAK1-dependent manner or in a BAX- and BAK1-independent manner. In response to endoplasmic reticulum stress promotes mitochondrial apoptosis through downstream BAX/BAK1 activation and positive regulation of PERK-mediated unfolded protein response. Activates apoptosis independently of heterodimerization with survival-promoting BCL2 and BCL2L1 through induction of mitochondrial outer membrane permeabilization, in a BAX- and BAK1-independent manner, in response to inhibition of ERAD-proteasome degradation system, resulting in cytochrome c release. In response to DNA damage, mediates intrinsic apoptotic process in a TP53-dependent manner. Plays a role in granulosa cell apoptosis by CASP3 activation. Plays a roles as anti-apoptotic protein during neuronal apoptotic process, by negatively regulating poly ADP-ribose polymerase-dependent cell death through regulation of neuronal calcium homeostasis and mitochondrial bioenergetics in response to NMDA excitation. In addition to its role in apoptosis, may regulate trophoblast cell proliferation during the early stages of placental development, by acting on G1/S transition through regulation of CCNE1 expression. May also play a role as an inducer of autophagy by disrupting interaction between MCL1 and BECN1. The polypeptide is Bcl-2-related ovarian killer protein (Mus musculus (Mouse)).